We begin with the raw amino-acid sequence, 509 residues long: MEEIQRYLQPDRSQQHNFLYPLIFQEYIYALAHDHGLNRNRSILLENPSYNNKFSLLIVKRLITRMYQQNHFLISTNDSNKNSFLGCNKSLYSQMISEGFAFIVEIPFSLRLISSLSSFEGKKIFKSHNLRSIHSTFPFLEDNFSHLNYVLDILIPYPVHLEILVQTLRYWVKDASSLHLLRFFLHEYWNLNSLITSKKPGYSFSKKNQRFFFFLYNSYVYECESTFVFLRNQSSHLRSTSFGALLERIYFYGKIERLVEVFAKDFQVTLWLFKDPFMHYVRYQGKSILASKGTFLLMNKWKFYLVNFWQCHFYLCFPTGRIHINQLSNHSRDFMGYLSSVRLNPSMLRSQMLENSFLINNAIKKFDTLVPIIPLIGSLAKANFCTVLGHPISKPVWSDLSDSDIIDRFGRICRNLFHYYSGSSKKKTLYRIKYILRLSCARTLARKHKSTVRTFLKRSGSELLEEFLTSEEQVLSLTFPRASSSLWGVYRSRIWYLDIFCIHDLANYQ.

It belongs to the intron maturase 2 family. MatK subfamily.

The protein localises to the plastid. It is found in the chloroplast. Its function is as follows. Usually encoded in the trnK tRNA gene intron. Probably assists in splicing its own and other chloroplast group II introns. The protein is Maturase K of Nicotiana glutinosa (Tobacco).